An 84-amino-acid chain; its full sequence is MGRYTTDQVQVYVLVIVLCTFFSTLQARSLRDHPLIHKNIDSRSLLQKLRIHISNHKQVRDISGDRLSPAGPDPQHNGRSPPRK.

The first 29 residues, 1 to 29 (MGRYTTDQVQVYVLVIVLCTFFSTLQARS), serve as a signal peptide directing secretion. The tract at residues 57–84 (KQVRDISGDRLSPAGPDPQHNGRSPPRK) is disordered. A hydroxyproline mark is found at P69 and P72. O-linked (Ara...) hydroxyproline glycosylation is present at P72.

The protein belongs to the CLV3/ESR signal peptide family. Post-translationally, the O-glycosylation (arabinosylation) of the hydroxyproline Pro-72 enhances binding affinity of the CLE13p peptide for its receptor. In terms of tissue distribution, expressed in young nodules throughout the central tissue. Expressed in the apical region of elongated nodules, corresponding to the meristematic and early infection zones.

It is found in the secreted. It localises to the extracellular space. Signaling peptide involved in the regulation of nodulation. Moves from root to shoot to function with the receptor kinase SUNN, in a signaling pathway that plays roles during cellular differentiation, both at the onset of nodulation, and later during nodule meristem development and subsequent homeostasis. Interacts with SUNN signaling to control nodule numbers. SUNN is involved in the autoregulation of nodulation (AON), a long distance systemic signaling from root to shoot and back again, which allows legumes to limit the number of root nodules formed based on available nitrogen and previous rhizobial colonization. The polypeptide is CLAVATA3/ESR (CLE)-related protein 13 (Medicago truncatula (Barrel medic)).